The chain runs to 284 residues: 2-dehydro-3-deoxyphosphooctonate aldolase (284 aa).

The protein belongs to the KdsA family.

It localises to the cytoplasm. The enzyme catalyses D-arabinose 5-phosphate + phosphoenolpyruvate + H2O = 3-deoxy-alpha-D-manno-2-octulosonate-8-phosphate + phosphate. It functions in the pathway carbohydrate biosynthesis; 3-deoxy-D-manno-octulosonate biosynthesis; 3-deoxy-D-manno-octulosonate from D-ribulose 5-phosphate: step 2/3. Its pathway is bacterial outer membrane biogenesis; lipopolysaccharide biosynthesis. This chain is 2-dehydro-3-deoxyphosphooctonate aldolase, found in Vibrio atlanticus (strain LGP32) (Vibrio splendidus (strain Mel32)).